A 62-amino-acid polypeptide reads, in one-letter code: MAQSTRLGNLIKSLPGYAPGKVVPGWGTTPVMAGIGFMLLIFLVTILQIYNQSLLLQSISFE.

Residues 30–50 traverse the membrane as a helical segment; the sequence is PVMAGIGFMLLIFLVTILQIY.

This sequence belongs to the PsbH family. In terms of assembly, PSII is composed of 1 copy each of membrane proteins PsbA, PsbB, PsbC, PsbD, PsbE, PsbF, PsbH, PsbI, PsbJ, PsbK, PsbL, PsbM, PsbT, PsbX, PsbY, Psb30/Ycf12, peripheral proteins PsbO, CyanoQ (PsbQ), PsbU, PsbV and a large number of cofactors. It forms dimeric complexes.

The protein localises to the cellular thylakoid membrane. Its function is as follows. One of the components of the core complex of photosystem II (PSII), required for its stability and/or assembly. PSII is a light-driven water:plastoquinone oxidoreductase that uses light energy to abstract electrons from H(2)O, generating O(2) and a proton gradient subsequently used for ATP formation. It consists of a core antenna complex that captures photons, and an electron transfer chain that converts photonic excitation into a charge separation. The polypeptide is Photosystem II reaction center protein H (Prochlorococcus marinus (strain MIT 9303)).